A 380-amino-acid chain; its full sequence is Chorismate synthase (380 aa).

Arg-47 contributes to the NADP(+) binding site. FMN-binding positions include 124 to 126, Gly-288, 303 to 307, and Arg-329; these read RSS and KPTST.

It belongs to the chorismate synthase family. As to quaternary structure, homotetramer. The cofactor is FMNH2.

The catalysed reaction is 5-O-(1-carboxyvinyl)-3-phosphoshikimate = chorismate + phosphate. Its pathway is metabolic intermediate biosynthesis; chorismate biosynthesis; chorismate from D-erythrose 4-phosphate and phosphoenolpyruvate: step 7/7. In terms of biological role, catalyzes the anti-1,4-elimination of the C-3 phosphate and the C-6 proR hydrogen from 5-enolpyruvylshikimate-3-phosphate (EPSP) to yield chorismate, which is the branch point compound that serves as the starting substrate for the three terminal pathways of aromatic amino acid biosynthesis. This reaction introduces a second double bond into the aromatic ring system. In Leptospira interrogans serogroup Icterohaemorrhagiae serovar copenhageni (strain Fiocruz L1-130), this protein is Chorismate synthase.